Consider the following 112-residue polypeptide: Secretoglobin family 2B member 20 (112 aa).

The N-terminal stretch at 1–23 (MKGTLLLLGLLVTGELSFQTTEA) is a signal peptide. Asn-50 carries N-linked (GlcNAc...) asparagine glycosylation.

The protein belongs to the secretoglobin family. Expressed in lacrimal gland, at higher level in males than females. Expressed in the submandibular gland.

The protein localises to the secreted. This Mus musculus (Mouse) protein is Secretoglobin family 2B member 20 (Scgb2b20).